Consider the following 79-residue polypeptide: Small ribosomal subunit protein bS18 (79 aa).

It belongs to the bacterial ribosomal protein bS18 family. As to quaternary structure, part of the 30S ribosomal subunit. Forms a tight heterodimer with protein bS6.

Functionally, binds as a heterodimer with protein bS6 to the central domain of the 16S rRNA, where it helps stabilize the platform of the 30S subunit. The protein is Small ribosomal subunit protein bS18 of Bradyrhizobium diazoefficiens (strain JCM 10833 / BCRC 13528 / IAM 13628 / NBRC 14792 / USDA 110).